The primary structure comprises 114 residues: MSIGLLCCVAFSLLWAGPVNAGVTQTPKFHILKTGQSMTLQCAQDMNHGYLSWYRQDPGMGLRRIHYSVAAGITDKGEVPDGYNVSRSNTEDFPLRLESAAPSQTSVYFCASSY.

The signal sequence occupies residues 1–21 (MSIGLLCCVAFSLLWAGPVNA). One can recognise an Ig-like domain in the interval 22–114 (GVTQTPKFHI…TSVYFCASSY (93 aa)). C42 and C110 are joined by a disulfide. An N-linked (GlcNAc...) asparagine glycan is attached at N84.

As to quaternary structure, alpha-beta TR is a heterodimer composed of an alpha and beta chain; disulfide-linked. The alpha-beta TR is associated with the transmembrane signaling CD3 coreceptor proteins to form the TR-CD3 (TcR or TCR). The assembly of alpha-beta TR heterodimers with CD3 occurs in the endoplasmic reticulum where a single alpha-beta TR heterodimer associates with one CD3D-CD3E heterodimer, one CD3G-CD3E heterodimer and one CD247 homodimer forming a stable octameric structure. CD3D-CD3E and CD3G-CD3E heterodimers preferentially associate with TR alpha and TR beta chains, respectively. The association of the CD247 homodimer is the last step of TcR assembly in the endoplasmic reticulum and is required for transport to the cell surface.

It localises to the cell membrane. Functionally, v region of the variable domain of T cell receptor (TR) beta chain that participates in the antigen recognition. Alpha-beta T cell receptors are antigen specific receptors which are essential to the immune response and are present on the cell surface of T lymphocytes. Recognize peptide-major histocompatibility (MH) (pMH) complexes that are displayed by antigen presenting cells (APC), a prerequisite for efficient T cell adaptive immunity against pathogens. Binding of alpha-beta TR to pMH complex initiates TR-CD3 clustering on the cell surface and intracellular activation of LCK that phosphorylates the ITAM motifs of CD3G, CD3D, CD3E and CD247 enabling the recruitment of ZAP70. In turn ZAP70 phosphorylates LAT, which recruits numerous signaling molecules to form the LAT signalosome. The LAT signalosome propagates signal branching to three major signaling pathways, the calcium, the mitogen-activated protein kinase (MAPK) kinase and the nuclear factor NF-kappa-B (NF-kB) pathways, leading to the mobilization of transcription factors that are critical for gene expression and essential for T cell growth and differentiation. The T cell repertoire is generated in the thymus, by V-(D)-J rearrangement. This repertoire is then shaped by intrathymic selection events to generate a peripheral T cell pool of self-MH restricted, non-autoaggressive T cells. Post-thymic interaction of alpha-beta TR with the pMH complexes shapes TR structural and functional avidity. In Homo sapiens (Human), this protein is T cell receptor beta variable 6-9.